Consider the following 1181-residue polypeptide: Sodium/potassium/calcium exchanger 1 (1181 aa).

Topologically, residues 1 to 419 (MGKLIRMGTQ…DLFSVEDRRQ (419 aa)) are extracellular. Disordered stretches follow at residues 107-232 (AMED…TSLK), 255-276 (SLVG…STTP), and 300-323 (STPA…GTST). Residues 124-136 (SLKNNYSPTTAGT) are compositionally biased toward polar residues. An N-linked (GlcNAc...) asparagine glycan is attached at N271. Over residues 301–311 (TPATTEGSTAA) the composition is skewed to polar residues. A helical membrane pass occupies residues 420–440 (GWVVLHIFGMTYVFVALAIVC). Residues 441–464 (DEYFVPALGVITDKLQISEDVAGA) are Cytoplasmic-facing. An Alpha-1 repeat occupies 461–501 (VAGATFMAAGGSAPELFTSLIGVFISHSNVGIGTIVGSAVF). Residues 465 to 485 (TFMAAGGSAPELFTSLIGVFI) traverse the membrane as a helical segment. Residues 486–491 (SHSNVG) are Extracellular-facing. The chain crosses the membrane as a helical span at residues 492–512 (IGTIVGSAVFNILFVIGTCAL). Residues 513 to 519 (FSREILN) lie on the Cytoplasmic side of the membrane. The helical transmembrane segment at 520-544 (LTWWPLFRDVSFYILDLSMLIVFFL) threads the bilayer. Residues 545-552 (DSLIAWWE) lie on the Extracellular side of the membrane. A helical transmembrane segment spans residues 553–569 (SLLLLLAYALYVFTMKW). Residues 570–989 (NKQIERWVKE…SLEWPESRQK (420 aa)) lie on the Cytoplasmic side of the membrane. The interval 598–617 (PSDGAIEENEQQDNKKLKLP) is disordered. Residue S625 is modified to Phosphoserine. The interval 650-983 (GEARPSKDKQ…ESEEPLSLEW (334 aa)) is disordered. T690 is subject to Phosphothreonine. Residues 701–715 (GDQEEDPGCQEDVDE) show a composition bias toward acidic residues. 14 repeat units span residues 730–741 (ETEAEGKKDEEG), 742–754 (ETEA…GQEE), 755–766 (ETETKGKEKQEG), 767–778 (ETESEGKDEQEG), 779–791 (ETEA…DHEG), 792–804 (ETEA…EHEG), 805–817 (ETEA…EQEG), 818–830 (ETEA…EQEG), 831–843 (ETEA…EHEV), 844–856 (ETEA…NHEG), 857–869 (ETEA…DHEG), 870–881 (ETEAEGNVEHQG), 882–893 (ETEAEGKVEHEG), and 894–905 (ETEAGEKDEHEG). Composition is skewed to basic and acidic residues over residues 730-750 (ETEA…RKED), 757-775 (ETKG…GKDE), and 782-805 (AEGK…HEGE). Residues 730–905 (ETEAEGKKDE…EAGEKDEHEG (176 aa)) form a 14 X approximate tandem repeats region. Positions 806–820 (TEAEGTEDEQEGETE) are enriched in acidic residues. Over residues 834-906 (AEGKEVEHEV…AGEKDEHEGQ (73 aa)) the composition is skewed to basic and acidic residues. Composition is skewed to acidic residues over residues 921-931 (GEAEANAEDQC) and 949-979 (GDSE…EEPL). Residues 990-1010 (QAIYLFLLPIVFPLWLTIPDV) form a helical membrane-spanning segment. Residues 1011–1017 (RRQEARK) lie on the Extracellular side of the membrane. The helical transmembrane segment at 1018 to 1038 (FFVITFLGSIIWIAMFSYLMV) threads the bilayer. Over 1039–1053 (WWAHQVGETIGISEE) the chain is Cytoplasmic. The helical transmembrane segment at 1054–1074 (IMGLTILAAGTSIPDLITSVI) threads the bilayer. One copy of the Alpha-2 repeat lies at 1061–1092 (AAGTSIPDLITSVIVARKGLGDMAVSSSVGSN). At 1075–1092 (VARKGLGDMAVSSSVGSN) the chain is on the extracellular side. Residues 1093–1113 (IFDITVGLPVPWLLFSLINAL) traverse the membrane as a helical segment. Over 1114–1121 (QPIPVSSN) the chain is Cytoplasmic. Residues 1122-1142 (GLFCAIVLLFLMLLFVIFSIA) traverse the membrane as a helical segment. Topologically, residues 1143-1150 (SCKWRMNK) are extracellular. Residues 1151 to 1171 (ILGFTMFLLYFVFLVISVMLE) form a helical membrane-spanning segment. Topologically, residues 1172 to 1181 (DRIISCPVSV) are cytoplasmic.

Belongs to the Ca(2+):cation antiporter (CaCA) (TC 2.A.19) family. SLC24A subfamily. Post-translationally, the uncleaved signal sequence is required for efficient membrane targeting and proper membrane integration and topology. In terms of tissue distribution, highly expressed in the eye.

The protein resides in the cell membrane. It catalyses the reaction Ca(2+)(out) + K(+)(out) + 4 Na(+)(in) = Ca(2+)(in) + K(+)(in) + 4 Na(+)(out). Its function is as follows. Calcium, potassium:sodium antiporter that transports 1 Ca(2+) and 1 K(+) in exchange for 4 Na(+). Critical component of the visual transduction cascade, controlling the calcium concentration of outer segments during light and darkness. Light causes a rapid lowering of cytosolic free calcium in the outer segment of both retinal rod and cone photoreceptors and the light-induced lowering of calcium is caused by extrusion via this protein which plays a key role in the process of light adaptation. This chain is Sodium/potassium/calcium exchanger 1 (Slc24a1), found in Rattus norvegicus (Rat).